Reading from the N-terminus, the 102-residue chain is Large ribosomal subunit protein bL21 (102 aa).

Belongs to the bacterial ribosomal protein bL21 family. As to quaternary structure, part of the 50S ribosomal subunit. Contacts protein L20.

Its function is as follows. This protein binds to 23S rRNA in the presence of protein L20. This is Large ribosomal subunit protein bL21 from Arthrobacter sp. (strain FB24).